The chain runs to 484 residues: Fumigaclavine B O-acetyltransferase ifgI (484 aa).

Belongs to the fumigaclavine B O-acetyltransferase family. In terms of assembly, monomer.

It carries out the reaction fumigaclavine B + acetyl-CoA = fumigaclavine A + CoA. It functions in the pathway alkaloid biosynthesis; ergot alkaloid biosynthesis. In terms of biological role, fumigaclavine B O-acetyltransferase; part of the gene cluster that mediates the biosynthesis of isofumigaclavines, fungal ergot alkaloids. The tryptophan dimethylallyltransferase ifgA catalyzes the first step of ergot alkaloid biosynthesis by condensing dimethylallyl diphosphate (DMAP) and tryptophan to form 4-dimethylallyl-L-tryptophan. The second step is catalyzed by the methyltransferase ifgB that methylates 4-dimethylallyl-L-tryptophan in the presence of S-adenosyl-L-methionine, resulting in the formation of N-methyl-dimethylallyl-L-tryptophan. The catalase ifgD and the FAD-dependent oxidoreductase ifgC then transform N-methyl-dimethylallyl-L-tryptophan to chanoclavine-I which is further oxidized by ifgE in the presence of NAD(+), resulting in the formation of chanoclavine-I aldehyde. The chanoclavine-I aldehyde reductases ifgG and/or fgaOx3 reduce chanoclavine-I aldehyde to dihydrochanoclavine-I aldehyde that spontaneously dehydrates to form 6,8-dimethyl-6,7-didehydroergoline. The festuclavine dehydrogenases ifgF1 and/or ifgF2 then catalyze the reduction of 6,8-dimethyl-6,7-didehydroergoline to form festuclavine. Hydrolysis of festuclavine by a yet undetermined cytochrome P450 monooxygenase (called ifgH) then leads to the formation of isofumigaclavine B which is in turn acetylated by ifgI to isofumigaclavine A. Penicillium roqueforti has interestingly at least two sets of genes for the consumption of chanoclavine-I aldehyde on three different loci, the OYEs ifgG/fgaOx3 and the festuclavine synthase homologs ifgF1/ifgF2. The reason for the duplication of these genes is unclear, probably to ensure the conversion of chanoclavine-I aldehyde by differential gene expression under various environmental conditions. This Penicillium roqueforti (strain FM164) protein is Fumigaclavine B O-acetyltransferase ifgI.